Here is a 184-residue protein sequence, read N- to C-terminus: MGLLTILKKMKQKERELRLLMLGLDNAGKTTILKKFNGEDIDTISPTLGFNIKTLEHRGFKLNIWDVGGQKSLRSYWRNYFESTDGLIWVVDSADRQRMQDCQRELQNLLVEERLAGATLLIFANKQDLPGALSSNAIREALELDSIRSHHWCIQGCSAVTGENLLPGIDWLLDDISSRIFMAD.

A lipid anchor (N-myristoyl glycine) is attached at glycine 2. 23–30 (GLDNAGKT) is a GTP binding site. A Phosphoserine modification is found at serine 45. Residues 66-70 (DVGGQ) and glycine 68 each bind GTP. Lysine 71 is covalently cross-linked (Glycyl lysine isopeptide (Lys-Gly) (interchain with G-Cter in ubiquitin)). 125 to 128 (NKQD) provides a ligand contact to GTP.

It belongs to the small GTPase superfamily. Arf family. As to quaternary structure, interacts with ELMOD2. Interacts with ARL2BP; the GTP-bound form interacts with ARL2BP. The GDP-bound form interacts preferentially with TBCD. Interacts with UNC119. Found in a complex with ARL2, ARL2BP and SLC25A4. The GTP-bound form interacts with PDE6D. Found in a complex with ARL2, ARL2BP and SLC25A6. Found in a complex with at least ARL2, PPP2CB, PPP2R1A, PPP2R2A, PPP2R5E and TBCD. In terms of processing, not N-myristoylated. Expressed in liver and retina (at protein level).

Its subcellular location is the nucleus. The protein localises to the mitochondrion intermembrane space. It localises to the cytoplasm. The protein resides in the cytoskeleton. It is found in the microtubule organizing center. Its subcellular location is the centrosome. The protein localises to the mitochondrion. Its function is as follows. Small GTP-binding protein which cycles between an inactive GDP-bound and an active GTP-bound form, and the rate of cycling is regulated by guanine nucleotide exchange factors (GEF) and GTPase-activating proteins (GAP). GTP-binding protein that does not act as an allosteric activator of the cholera toxin catalytic subunit. Regulates formation of new microtubules and centrosome integrity. Prevents the TBCD-induced microtubule destruction. Participates in association with TBCD, in the disassembly of the apical junction complexes. Antagonizes the effect of TBCD on epithelial cell detachment and tight and adherens junctions disassembly. Together with ARL2, plays a role in the nuclear translocation, retention and transcriptional activity of STAT3. Component of a regulated secretory pathway involved in Ca(2+)-dependent release of acetylcholine. Required for normal progress through the cell cycle. This chain is ADP-ribosylation factor-like protein 2 (ARL2), found in Bos taurus (Bovine).